The chain runs to 507 residues: Probable DNA ligase (507 aa).

Glutamate 209 contacts ATP. Lysine 211 serves as the catalytic N6-AMP-lysine intermediate. ATP is bound by residues arginine 216, arginine 231, glutamate 260, phenylalanine 300, arginine 372, and lysine 378.

Belongs to the ATP-dependent DNA ligase family. Requires Mg(2+) as cofactor.

It catalyses the reaction ATP + (deoxyribonucleotide)n-3'-hydroxyl + 5'-phospho-(deoxyribonucleotide)m = (deoxyribonucleotide)n+m + AMP + diphosphate.. Functionally, DNA ligase that seals nicks in double-stranded DNA during DNA replication, DNA recombination and DNA repair. This chain is Probable DNA ligase, found in Mycobacterium bovis (strain ATCC BAA-935 / AF2122/97).